The primary structure comprises 302 residues: MNNYLILSDEVQRGMAQGLPIVALESTIISHGMPYPQNVAMAREVEQIIRDNGAVPATIAIIDGKIRIGLSDDELELFGSSKGIAKVSRRDLPQIIASKKLGATTVASTMICAHLAGIKFFVTGGLGGVHKGWETTLDISADLDELAQTSVTVICAGAKSILDLDATLEYLETKGVPVVGYKTKNLPAFFTRDSGLPLALSCEELTEIAEMIKVKWQLGLEGGVVVANPIPQEDELAPSYINGIIDTAVKEAEEKGIIGKDITPFLLGKIVEMTEGKSLEANIKLVKNNAKVGARLAVEFFK.

Catalysis depends on Glu25, which acts as the Proton donor. 2 residues coordinate substrate: Lys86 and Val106. Residue Asp138 coordinates Mn(2+). Ser140–Asp142 contacts substrate. The active-site Nucleophile is the Lys159.

Belongs to the pseudouridine-5'-phosphate glycosidase family. In terms of assembly, homotrimer. The cofactor is Mn(2+).

It carries out the reaction D-ribose 5-phosphate + uracil = psi-UMP + H2O. Its function is as follows. Catalyzes the reversible cleavage of pseudouridine 5'-phosphate (PsiMP) to ribose 5-phosphate and uracil. Functions biologically in the cleavage direction, as part of a pseudouridine degradation pathway. This is Pseudouridine-5'-phosphate glycosidase from Glaesserella parasuis serovar 5 (strain SH0165) (Haemophilus parasuis).